We begin with the raw amino-acid sequence, 90 residues long: MEKLTYYQEITFNGKKQKRKKEEVIKMTGKVTKMHSTKNYDVLLENDQEIKAYISGKMSLHNIKLIPGDMVDVEISPFNLTLGRIVFRHK.

An S1-like domain is found at 15–90 (KKQKRKKEEV…TLGRIVFRHK (76 aa)).

Belongs to the IF-1 family. Component of the 30S ribosomal translation pre-initiation complex which assembles on the 30S ribosome in the order IF-2 and IF-3, IF-1 and N-formylmethionyl-tRNA(fMet); mRNA recruitment can occur at any time during PIC assembly.

It is found in the cytoplasm. In terms of biological role, one of the essential components for the initiation of protein synthesis. Stabilizes the binding of IF-2 and IF-3 on the 30S subunit to which N-formylmethionyl-tRNA(fMet) subsequently binds. Helps modulate mRNA selection, yielding the 30S pre-initiation complex (PIC). Upon addition of the 50S ribosomal subunit IF-1, IF-2 and IF-3 are released leaving the mature 70S translation initiation complex. In Mycoplasma sp, this protein is Translation initiation factor IF-1.